The chain runs to 105 residues: Large ribosomal subunit protein uL24 (105 aa).

This sequence belongs to the universal ribosomal protein uL24 family. In terms of assembly, part of the 50S ribosomal subunit.

One of two assembly initiator proteins, it binds directly to the 5'-end of the 23S rRNA, where it nucleates assembly of the 50S subunit. Its function is as follows. One of the proteins that surrounds the polypeptide exit tunnel on the outside of the subunit. This chain is Large ribosomal subunit protein uL24, found in Vibrio campbellii (strain ATCC BAA-1116).